Reading from the N-terminus, the 175-residue chain is uncharacterized protein (175 aa).

This is an uncharacterized protein from Methanocaldococcus jannaschii (strain ATCC 43067 / DSM 2661 / JAL-1 / JCM 10045 / NBRC 100440) (Methanococcus jannaschii).